The sequence spans 107 residues: Phosphoribosyl-ATP pyrophosphatase (107 aa).

The protein belongs to the PRA-PH family.

It localises to the cytoplasm. It carries out the reaction 1-(5-phospho-beta-D-ribosyl)-ATP + H2O = 1-(5-phospho-beta-D-ribosyl)-5'-AMP + diphosphate + H(+). It participates in amino-acid biosynthesis; L-histidine biosynthesis; L-histidine from 5-phospho-alpha-D-ribose 1-diphosphate: step 2/9. This Neisseria meningitidis serogroup A / serotype 4A (strain DSM 15465 / Z2491) protein is Phosphoribosyl-ATP pyrophosphatase (hisE).